Reading from the N-terminus, the 122-residue chain is Large ribosomal subunit protein uL14 (122 aa).

Belongs to the universal ribosomal protein uL14 family. Part of the 50S ribosomal subunit. Forms a cluster with proteins L3 and L19. In the 70S ribosome, L14 and L19 interact and together make contacts with the 16S rRNA in bridges B5 and B8.

Binds to 23S rRNA. Forms part of two intersubunit bridges in the 70S ribosome. This Halorhodospira halophila (strain DSM 244 / SL1) (Ectothiorhodospira halophila (strain DSM 244 / SL1)) protein is Large ribosomal subunit protein uL14.